Consider the following 191-residue polypeptide: Ribonuclease HII (191 aa).

The RNase H type-2 domain occupies 4 to 191 (YTAAGLDEVG…HRKTFLSKIQ (188 aa)). A divalent metal cation-binding residues include Asp-10, Glu-11, and Asp-106.

It belongs to the RNase HII family. Mn(2+) is required as a cofactor. The cofactor is Mg(2+).

The protein localises to the cytoplasm. The catalysed reaction is Endonucleolytic cleavage to 5'-phosphomonoester.. Its function is as follows. Endonuclease that specifically degrades the RNA of RNA-DNA hybrids. The polypeptide is Ribonuclease HII (Prochlorococcus marinus (strain SARG / CCMP1375 / SS120)).